Reading from the N-terminus, the 313-residue chain is Ribonuclease Z (313 aa).

His-63, His-65, Asp-67, His-68, His-142, Asp-212, and His-270 together coordinate Zn(2+). Asp-67 (proton acceptor) is an active-site residue.

Belongs to the RNase Z family. As to quaternary structure, homodimer. Zn(2+) serves as cofactor.

The catalysed reaction is Endonucleolytic cleavage of RNA, removing extra 3' nucleotides from tRNA precursor, generating 3' termini of tRNAs. A 3'-hydroxy group is left at the tRNA terminus and a 5'-phosphoryl group is left at the trailer molecule.. In terms of biological role, zinc phosphodiesterase, which displays some tRNA 3'-processing endonuclease activity. Probably involved in tRNA maturation, by removing a 3'-trailer from precursor tRNA. The polypeptide is Ribonuclease Z (Enterococcus faecalis (strain ATCC 700802 / V583)).